Here is a 400-residue protein sequence, read N- to C-terminus: Renin (400 aa).

Positions 1–23 (MDAWRGMPRWGLLLLLWGSCTFG) are cleaved as a signal peptide. Residues 24–60 (LPTETTTFKRISLKRMPSIRESLKERGVDMARLGPER) constitute a propeptide, activation peptide. N65 carries N-linked (GlcNAc...) asparagine glycosylation. The 318-residue stretch at 80–397 (YYGEIGIGTP…DRGNNRIGFA (318 aa)) folds into the Peptidase A1 domain. The active site involves D98. A disulfide bond links C111 and C118. N135 is a glycosylation site (N-linked (GlcNAc...) asparagine). The cysteines at positions 277 and 281 are disulfide-linked. D286 is a catalytic residue. A disulfide bridge connects residues C319 and C356.

It belongs to the peptidase A1 family. Interacts with ATP6AP2.

The protein localises to the secreted. Its subcellular location is the membrane. It catalyses the reaction Cleavage of Leu-|-Xaa bond in angiotensinogen to generate angiotensin I.. Interaction with ATP6AP2 results in a 5-fold increased efficiency in angiotensinogen processing. Its function is as follows. Renin is a highly specific endopeptidase, whose only known function is to generate angiotensin I from angiotensinogen in the plasma, initiating a cascade of reactions that produce an elevation of blood pressure and increased sodium retention by the kidney. This chain is Renin (REN), found in Callithrix jacchus (White-tufted-ear marmoset).